A 97-amino-acid polypeptide reads, in one-letter code: uncharacterized protein (97 aa).

This is an uncharacterized protein from Geobacillus stearothermophilus (Bacillus stearothermophilus).